The sequence spans 211 residues: FMN-dependent NADH:quinone oxidoreductase (211 aa).

FMN is bound by residues 17 to 19 (SYS) and 102 to 105 (MWNF).

This sequence belongs to the azoreductase type 1 family. Homodimer. FMN is required as a cofactor.

The enzyme catalyses 2 a quinone + NADH + H(+) = 2 a 1,4-benzosemiquinone + NAD(+). The catalysed reaction is N,N-dimethyl-1,4-phenylenediamine + anthranilate + 2 NAD(+) = 2-(4-dimethylaminophenyl)diazenylbenzoate + 2 NADH + 2 H(+). In terms of biological role, quinone reductase that provides resistance to thiol-specific stress caused by electrophilic quinones. Functionally, also exhibits azoreductase activity. Catalyzes the reductive cleavage of the azo bond in aromatic azo compounds to the corresponding amines. The chain is FMN-dependent NADH:quinone oxidoreductase from Geobacillus kaustophilus (strain HTA426).